A 134-amino-acid polypeptide reads, in one-letter code: Cytochrome b5 (134 aa).

The Cytochrome b5 heme-binding domain maps to valine 6–valine 82. Residues histidine 41 and histidine 65 each contribute to the heme site. A helical membrane pass occupies residues tryptophan 111 to threonine 131.

It belongs to the cytochrome b5 family.

It localises to the endoplasmic reticulum membrane. The protein resides in the microsome membrane. Its function is as follows. Cytochrome b5 is a membrane bound hemoprotein which function as an electron carrier for several membrane bound oxygenases. The sequence is that of Cytochrome b5 (Cyt-b5) from Musca domestica (House fly).